Reading from the N-terminus, the 487-residue chain is Bifunctional protein GlmU (487 aa).

The tract at residues 1 to 235 is pyrophosphorylase; that stretch reads MSHSPTPLAA…PEEASGVNDR (235 aa). UDP-N-acetyl-alpha-D-glucosamine-binding positions include 13–16, Lys27, Gln82, 87–88, 110–112, Gly147, Glu162, Asn177, and Asn233; these read LAAG, GT, and SGD. Asp112 contacts Mg(2+). A Mg(2+)-binding site is contributed by Asn233. The tract at residues 236-256 is linker; it reads EELARAGRVLLRRRASELMRS. The tract at residues 257–487 is N-acetyltransferase; it reads GVTIEDPERF…ADSPRGGRAS (231 aa). The UDP-N-acetyl-alpha-D-glucosamine site is built by Arg339 and Lys357. The Proton acceptor role is filled by His369. UDP-N-acetyl-alpha-D-glucosamine-binding residues include Tyr372 and Asn383. Residues Ala386, 392–393, Ser411, Ala429, and Arg446 contribute to the acetyl-CoA site; that span reads NY. Residues 453-487 are disordered; it reads EGWVARRKAEAQNKGAAEAAPAPSPADSPRGGRAS. The span at 468–481 shows a compositional bias: low complexity; that stretch reads AAEAAPAPSPADSP.

This sequence in the N-terminal section; belongs to the N-acetylglucosamine-1-phosphate uridyltransferase family. It in the C-terminal section; belongs to the transferase hexapeptide repeat family. In terms of assembly, homotrimer. The cofactor is Mg(2+).

The protein localises to the cytoplasm. The enzyme catalyses alpha-D-glucosamine 1-phosphate + acetyl-CoA = N-acetyl-alpha-D-glucosamine 1-phosphate + CoA + H(+). It catalyses the reaction N-acetyl-alpha-D-glucosamine 1-phosphate + UTP + H(+) = UDP-N-acetyl-alpha-D-glucosamine + diphosphate. It functions in the pathway nucleotide-sugar biosynthesis; UDP-N-acetyl-alpha-D-glucosamine biosynthesis; N-acetyl-alpha-D-glucosamine 1-phosphate from alpha-D-glucosamine 6-phosphate (route II): step 2/2. It participates in nucleotide-sugar biosynthesis; UDP-N-acetyl-alpha-D-glucosamine biosynthesis; UDP-N-acetyl-alpha-D-glucosamine from N-acetyl-alpha-D-glucosamine 1-phosphate: step 1/1. The protein operates within bacterial outer membrane biogenesis; LPS lipid A biosynthesis. Functionally, catalyzes the last two sequential reactions in the de novo biosynthetic pathway for UDP-N-acetylglucosamine (UDP-GlcNAc). The C-terminal domain catalyzes the transfer of acetyl group from acetyl coenzyme A to glucosamine-1-phosphate (GlcN-1-P) to produce N-acetylglucosamine-1-phosphate (GlcNAc-1-P), which is converted into UDP-GlcNAc by the transfer of uridine 5-monophosphate (from uridine 5-triphosphate), a reaction catalyzed by the N-terminal domain. This is Bifunctional protein GlmU from Anaeromyxobacter sp. (strain Fw109-5).